The primary structure comprises 321 residues: Glucokinase (321 aa).

8–13 (ADIGGT) contacts ATP.

Belongs to the bacterial glucokinase family.

The protein localises to the cytoplasm. It carries out the reaction D-glucose + ATP = D-glucose 6-phosphate + ADP + H(+). The sequence is that of Glucokinase from Paramagnetospirillum magneticum (strain ATCC 700264 / AMB-1) (Magnetospirillum magneticum).